The chain runs to 567 residues: tRNA (uracil-O(2)-)-methyltransferase (567 aa).

Position 107 is a phosphoserine (serine 107).

The protein belongs to the TRM44 family.

Its subcellular location is the cytoplasm. The enzyme catalyses uridine(44) in tRNA(Ser) + S-adenosyl-L-methionine = 2'-O-methyluridine(44) in tRNA(Ser) + S-adenosyl-L-homocysteine + H(+). Its function is as follows. tRNA (uracil-O(2)-)-methyltransferase, which catalyzes the formation of O(2)-methyluracil at position 44 (Um44) in tRNA(Ser). This Saccharomyces cerevisiae (strain ATCC 204508 / S288c) (Baker's yeast) protein is tRNA (uracil-O(2)-)-methyltransferase (TRM44).